Reading from the N-terminus, the 517-residue chain is MACSGCSCEAAVGAMASEAYLEGAPVREARELVAELCRHFYAQGWVTGTGGSITVKVNDPTVPLADRLIVMSPSGVQKERMVAEDMYVMAADGKVLSAPVAKPWPNKPPKCTDCAPLFMKAYLMRGAGAVIHSHGIETCIATMLIPGAKEFRVTHMEMIKGIKGHGYHDELVIPIIENTPYEYELTDSLSEAIAAYPKATAVLVRNHGIYVWGESWINAKTQAECYHYLLDACIKLYQLGIDWTTPEHGSINNPRRPHSILSPEICNGCHAADSSKCVVLDIEGTTTPISFVTDVMFPYARDNVRKHLTSTFDFEETKEDIKLLRIQIEDDLQNGVAGAVPVPPDEGGKEEVINSLVANVESMIKADRKITSLKQLQGHIWRIGFQKKELQGVVFEDVPVALKNWHASGIKVYIYSSGSREAQRLLFGNTTYGDLRKFLCGYFDTTTGNKRETRSYFEISQSLGVDSPSQILFITDVFQEAIAAKNAGFEVIISIRPGNAPLPDNHGFRTIKSFSEI.

The tract at residues 1 to 242 is methylthioribulose-1-phosphate dehydratase; that stretch reads MACSGCSCEA…CIKLYQLGID (242 aa). Substrate is bound at residue cysteine 114. The Zn(2+) site is built by histidine 132 and histidine 134. Catalysis depends on glutamate 157, which acts as the Proton donor/acceptor; for methylthioribulose-1-phosphate dehydratase activity. A Zn(2+)-binding site is contributed by histidine 207. The enolase-phosphatase E1 stretch occupies residues 278–517; sequence VVLDIEGTTT…FRTIKSFSEI (240 aa). Mg(2+) is bound by residues aspartate 281 and glutamate 283. Residues 416–417 and lysine 450 contribute to the substrate site; that span reads SS. Aspartate 476 contacts Mg(2+).

In the N-terminal section; belongs to the aldolase class II family. MtnB subfamily. The protein in the C-terminal section; belongs to the HAD-like hydrolase superfamily. MasA/MtnC family. Requires Zn(2+) as cofactor. Mg(2+) serves as cofactor.

The enzyme catalyses 5-(methylsulfanyl)-D-ribulose 1-phosphate = 5-methylsulfanyl-2,3-dioxopentyl phosphate + H2O. It carries out the reaction 5-methylsulfanyl-2,3-dioxopentyl phosphate + H2O = 1,2-dihydroxy-5-(methylsulfanyl)pent-1-en-3-one + phosphate. It participates in amino-acid biosynthesis; L-methionine biosynthesis via salvage pathway; L-methionine from S-methyl-5-thio-alpha-D-ribose 1-phosphate: step 2/6. The protein operates within amino-acid biosynthesis; L-methionine biosynthesis via salvage pathway; L-methionine from S-methyl-5-thio-alpha-D-ribose 1-phosphate: step 3/6. Its pathway is amino-acid biosynthesis; L-methionine biosynthesis via salvage pathway; L-methionine from S-methyl-5-thio-alpha-D-ribose 1-phosphate: step 4/6. This is Probable bifunctional methylthioribulose-1-phosphate dehydratase/enolase-phosphatase E1 from Zea mays (Maize).